A 380-amino-acid chain; its full sequence is 1-deoxy-D-xylulose 5-phosphate reductoisomerase (380 aa).

NADPH-binding residues include T10, G11, S12, I13, G35, R36, N37, and N121. K122 lines the 1-deoxy-D-xylulose 5-phosphate pocket. E123 is a binding site for NADPH. D147 provides a ligand contact to Mn(2+). The 1-deoxy-D-xylulose 5-phosphate site is built by S148, E149, S173, and H196. Residue E149 participates in Mn(2+) binding. NADPH is bound at residue G202. Positions 209, 214, 215, and 218 each coordinate 1-deoxy-D-xylulose 5-phosphate. Residue E218 participates in Mn(2+) binding.

The protein belongs to the DXR family. The cofactor is Mg(2+). Mn(2+) is required as a cofactor.

The catalysed reaction is 2-C-methyl-D-erythritol 4-phosphate + NADP(+) = 1-deoxy-D-xylulose 5-phosphate + NADPH + H(+). Its pathway is isoprenoid biosynthesis; isopentenyl diphosphate biosynthesis via DXP pathway; isopentenyl diphosphate from 1-deoxy-D-xylulose 5-phosphate: step 1/6. In terms of biological role, catalyzes the NADPH-dependent rearrangement and reduction of 1-deoxy-D-xylulose-5-phosphate (DXP) to 2-C-methyl-D-erythritol 4-phosphate (MEP). This Agathobacter rectalis (strain ATCC 33656 / DSM 3377 / JCM 17463 / KCTC 5835 / VPI 0990) (Eubacterium rectale) protein is 1-deoxy-D-xylulose 5-phosphate reductoisomerase.